The chain runs to 177 residues: MDLPAPIHDILLVSLGSGLIVGGLGVVLLTNPIYSAFSSGLVLVCISLFYIPSNSYFVAAAQLLIYVGAINVLILFAVMFMNGSEYYNSFHFWTIGDGFTSVVCTSIFFSLIATIPNTSWYGIIWTTRSNQIIEQDLTSNVQQIGIHLSTDFYLPFELISIILLVSLVGAIAMARRE.

A run of 5 helical transmembrane segments spans residues 10–30 (ILLV…VLLT), 32–52 (PIYS…FYIP), 61–81 (AQLL…VMFM), 92–112 (FWTI…FSLI), and 152–172 (FYLP…GAIA).

It belongs to the complex I subunit 6 family. NDH is composed of at least 16 different subunits, 5 of which are encoded in the nucleus.

It localises to the plastid. The protein resides in the chloroplast thylakoid membrane. The catalysed reaction is a plastoquinone + NADH + (n+1) H(+)(in) = a plastoquinol + NAD(+) + n H(+)(out). It carries out the reaction a plastoquinone + NADPH + (n+1) H(+)(in) = a plastoquinol + NADP(+) + n H(+)(out). In terms of biological role, NDH shuttles electrons from NAD(P)H:plastoquinone, via FMN and iron-sulfur (Fe-S) centers, to quinones in the photosynthetic chain and possibly in a chloroplast respiratory chain. The immediate electron acceptor for the enzyme in this species is believed to be plastoquinone. Couples the redox reaction to proton translocation, and thus conserves the redox energy in a proton gradient. This Nuphar advena (Common spatterdock) protein is NAD(P)H-quinone oxidoreductase subunit 6, chloroplastic (ndhG).